Consider the following 175-residue polypeptide: ADDPVYDAEGNKLVNRGKYTIVSFSDGAGIDVVATGNENPEDPLSIVKSTRNIMYATSISSEDKTPPQPRNILENMRLKINFATDPHKGDVWSVVDFQPDGQQLKLAGRYPNQVKGAFTIQKGSNTPRTYKLLFCPVGSPCKNIGISTDPEGKKRLVVSYQSDPLVVKFHRHEPE.

A disulfide bridge links C135 with C141.

Belongs to the protease inhibitor I3 (leguminous Kunitz-type inhibitor) family.

Functionally, 2S seed storage protein. The sequence is that of Albumin-1 from Psophocarpus tetragonolobus (Winged bean).